A 327-amino-acid chain; its full sequence is Phenylalanine--tRNA ligase alpha subunit (327 aa).

Glu-252 provides a ligand contact to Mg(2+).

The protein belongs to the class-II aminoacyl-tRNA synthetase family. Phe-tRNA synthetase alpha subunit type 1 subfamily. In terms of assembly, tetramer of two alpha and two beta subunits. The cofactor is Mg(2+).

It localises to the cytoplasm. The catalysed reaction is tRNA(Phe) + L-phenylalanine + ATP = L-phenylalanyl-tRNA(Phe) + AMP + diphosphate + H(+). The polypeptide is Phenylalanine--tRNA ligase alpha subunit (Shewanella denitrificans (strain OS217 / ATCC BAA-1090 / DSM 15013)).